The following is a 225-amino-acid chain: Pyrimidine 5'-nucleotidase YjjG (225 aa).

Aspartate 9 (nucleophile) is an active-site residue.

Belongs to the HAD-like hydrolase superfamily. YjjG family. In terms of assembly, monomer, homodimer and possibly homotetramer in solution. The cofactor is Mn(2+). It depends on Mg(2+) as a cofactor. Requires Co(2+) as cofactor.

It localises to the cytoplasm. It carries out the reaction a ribonucleoside 5'-phosphate + H2O = a ribonucleoside + phosphate. The catalysed reaction is a 2'-deoxyribonucleoside 5'-phosphate + H2O = a 2'-deoxyribonucleoside + phosphate. The enzyme catalyses UMP + H2O = uridine + phosphate. It catalyses the reaction dUMP + H2O = 2'-deoxyuridine + phosphate. It carries out the reaction dTMP + H2O = thymidine + phosphate. Its activity is regulated as follows. In contrast to nucleotidases from other families, is not inhibited by ribo- and deoxyribonucleoside di- and triphosphates. In terms of biological role, nucleotidase that shows high phosphatase activity toward non-canonical pyrimidine nucleotides and three canonical nucleoside 5'-monophosphates (UMP, dUMP, and dTMP), and very low activity against TDP, IMP, UDP, GMP, dGMP, AMP, dAMP, and 6-phosphogluconate. Appears to function as a house-cleaning nucleotidase in vivo, since the general nucleotidase activity of YjjG allows it to protect cells against non-canonical pyrimidine derivatives such as 5-fluoro-2'-deoxyuridine, 5-fluorouridine, 5-fluoroorotate, 5-fluorouracil, and 5-aza-2'-deoxycytidine, and prevents the incorporation of potentially mutagenic nucleotides into DNA. Its dUMP phosphatase activity that catalyzes the hydrolysis of dUMP to deoxyuridine is necessary for thymine utilization via the thymine salvage pathway. Is strictly specific to substrates with 5'-phosphates and shows no activity against nucleoside 2'- or 3'-monophosphates. This is Pyrimidine 5'-nucleotidase YjjG (yjjG) from Escherichia coli (strain K12).